A 426-amino-acid polypeptide reads, in one-letter code: 26S proteasome regulatory subunit 7 (426 aa).

209–216 is an ATP binding site; it reads GPPGTGKT.

This sequence belongs to the AAA ATPase family.

The protein localises to the cytoplasm. Its subcellular location is the nucleus. The 26S proteasome is involved in the ATP-dependent degradation of ubiquitinated proteins. The regulatory (or ATPase) complex confers ATP dependency and substrate specificity to the 26S complex. In Spinacia oleracea (Spinach), this protein is 26S proteasome regulatory subunit 7 (RPT1).